The following is a 507-amino-acid chain: Capsid vertex component 1 (507 aa).

The interval 219–257 (AAAETSVSKHHPALENPSNIRGSAGGEGGGGRAGTGGTV) is disordered. The segment covering 241 to 257 (SAGGEGGGGRAGTGGTV) has biased composition (gly residues).

It belongs to the herpesviridae CVC1 protein family. As to quaternary structure, interacts (via C-terminus) with capsid vertex component 2/CVC2.

Its subcellular location is the virion. It is found in the host nucleus. Capsid vertex-specific component that plays a role during viral DNA encapsidation, assuring correct genome cleavage and presumably stabilizing capsids that contain full-length viral genomes. This is Capsid vertex component 1 from Epstein-Barr virus (strain B95-8) (HHV-4).